The primary structure comprises 177 residues: Large ribosomal subunit protein uL6 (177 aa).

It belongs to the universal ribosomal protein uL6 family. Part of the 50S ribosomal subunit.

In terms of biological role, this protein binds to the 23S rRNA, and is important in its secondary structure. It is located near the subunit interface in the base of the L7/L12 stalk, and near the tRNA binding site of the peptidyltransferase center. The sequence is that of Large ribosomal subunit protein uL6 from Sphingopyxis alaskensis (strain DSM 13593 / LMG 18877 / RB2256) (Sphingomonas alaskensis).